The sequence spans 131 residues: LHRGPPGSRGPMIPPLLSLPPPPRGRGPLRGGLGPRSGPYGRGWWGVNAEPPFPGPGHGGPSRGGFHKEQRNPRRLKSWSLIKNTCPPKDGPQVMEDKSDRPVCRHFAKKGHCRYEDLCAFYHPGANGPPL.

The segment at 1 to 77 (LHRGPPGSRG…KEQRNPRRLK (77 aa)) is disordered. The segment covering 12-25 (MIPPLLSLPPPPRG) has biased composition (pro residues). Over residues 28 to 44 (PLRGGLGPRSGPYGRGW) the composition is skewed to gly residues. The C3H1-type zinc-finger motif lies at 98–126 (KSDRPVCRHFAKKGHCRYEDLCAFYHPGA).

The chain is Proline-rich protein 3 (PRR3) from Sus scrofa (Pig).